We begin with the raw amino-acid sequence, 118 residues long: uncharacterized protein (118 aa).

The segment covering 1–12 has biased composition (polar residues); sequence MADDNVSFTDQG. Residues 1 to 63 are disordered; that stretch reads MADDNVSFTD…KKGKTKKVRK (63 aa). The span at 39 to 63 shows a compositional bias: basic residues; it reads TKKKGKKNKKSKKKAKKGKTKKVRK. The chain crosses the membrane as a helical span at residues 81–101; the sequence is FCAGIIVAMIMLFVIIIYGII.

It is found in the membrane. This is an uncharacterized protein from Caenorhabditis elegans.